A 140-amino-acid chain; its full sequence is 3-hydroxyacyl-[acyl-carrier-protein] dehydratase FabZ (140 aa).

Residue His-46 is part of the active site.

The protein belongs to the thioester dehydratase family. FabZ subfamily.

It localises to the cytoplasm. The enzyme catalyses a (3R)-hydroxyacyl-[ACP] = a (2E)-enoyl-[ACP] + H2O. In terms of biological role, involved in unsaturated fatty acids biosynthesis. Catalyzes the dehydration of short chain beta-hydroxyacyl-ACPs and long chain saturated and unsaturated beta-hydroxyacyl-ACPs. This is 3-hydroxyacyl-[acyl-carrier-protein] dehydratase FabZ from Pseudothermotoga lettingae (strain ATCC BAA-301 / DSM 14385 / NBRC 107922 / TMO) (Thermotoga lettingae).